Consider the following 143-residue polypeptide: Ribonuclease P protein component 2 (143 aa).

It belongs to the eukaryotic/archaeal RNase P protein component 2 family. In terms of assembly, consists of a catalytic RNA component and at least 4-5 protein subunits.

It localises to the cytoplasm. It catalyses the reaction Endonucleolytic cleavage of RNA, removing 5'-extranucleotides from tRNA precursor.. Part of ribonuclease P, a protein complex that generates mature tRNA molecules by cleaving their 5'-ends. This chain is Ribonuclease P protein component 2, found in Saccharolobus islandicus (strain L.S.2.15 / Lassen #1) (Sulfolobus islandicus).